A 196-amino-acid polypeptide reads, in one-letter code: Holliday junction branch migration complex subunit RuvA (196 aa).

Positions 1–63 are domain I; the sequence is MYDYIKGILT…EDAHLLYGFA (63 aa). The tract at residues 64 to 142 is domain II; the sequence is TENEKSVFLS…MSEEAGPVQQ (79 aa). Residues 142-146 form a flexible linker region; the sequence is QVAPS. The domain III stretch occupies residues 147–196; the sequence is SENIALEEAMEAMEALGYRPAELKKIKKFFEGTNDTAENYIKSALKMLMK.

This sequence belongs to the RuvA family. As to quaternary structure, homotetramer. Forms an RuvA(8)-RuvB(12)-Holliday junction (HJ) complex. HJ DNA is sandwiched between 2 RuvA tetramers; dsDNA enters through RuvA and exits via RuvB. An RuvB hexamer assembles on each DNA strand where it exits the tetramer. Each RuvB hexamer is contacted by two RuvA subunits (via domain III) on 2 adjacent RuvB subunits; this complex drives branch migration. In the full resolvosome a probable DNA-RuvA(4)-RuvB(12)-RuvC(2) complex forms which resolves the HJ.

The protein localises to the cytoplasm. In terms of biological role, the RuvA-RuvB-RuvC complex processes Holliday junction (HJ) DNA during genetic recombination and DNA repair, while the RuvA-RuvB complex plays an important role in the rescue of blocked DNA replication forks via replication fork reversal (RFR). RuvA specifically binds to HJ cruciform DNA, conferring on it an open structure. The RuvB hexamer acts as an ATP-dependent pump, pulling dsDNA into and through the RuvAB complex. HJ branch migration allows RuvC to scan DNA until it finds its consensus sequence, where it cleaves and resolves the cruciform DNA. This chain is Holliday junction branch migration complex subunit RuvA, found in Streptococcus suis (strain 98HAH33).